A 232-amino-acid polypeptide reads, in one-letter code: tRNA pseudouridine synthase B (232 aa).

Aspartate 53 (nucleophile) is an active-site residue.

This sequence belongs to the pseudouridine synthase TruB family. Type 1 subfamily.

The enzyme catalyses uridine(55) in tRNA = pseudouridine(55) in tRNA. In terms of biological role, responsible for synthesis of pseudouridine from uracil-55 in the psi GC loop of transfer RNAs. The protein is tRNA pseudouridine synthase B of Malacoplasma penetrans (strain HF-2) (Mycoplasma penetrans).